The sequence spans 385 residues: GTPase Obg (385 aa).

Residues 1–159 (MKFVDEVEIR…RNLKLELLLL (159 aa)) form the Obg domain. Residues 160–333 (ADVGLLGLPN…LIHDVMTLLE (174 aa)) enclose the OBG-type G domain. Residues 166-173 (GLPNAGKS), 191-195 (FTTLI), 213-216 (DIPG), 283-286 (NKID), and 314-316 (SAI) contribute to the GTP site. Ser173 and Thr193 together coordinate Mg(2+).

This sequence belongs to the TRAFAC class OBG-HflX-like GTPase superfamily. OBG GTPase family. In terms of assembly, monomer. Requires Mg(2+) as cofactor.

The protein resides in the cytoplasm. In terms of biological role, an essential GTPase which binds GTP, GDP and possibly (p)ppGpp with moderate affinity, with high nucleotide exchange rates and a fairly low GTP hydrolysis rate. Plays a role in control of the cell cycle, stress response, ribosome biogenesis and in those bacteria that undergo differentiation, in morphogenesis control. The chain is GTPase Obg from Pseudoalteromonas translucida (strain TAC 125).